The sequence spans 186 residues: MRHGSIPGTRGHVRPLALLGDPVLHAPCEEVTDHGPELARLVEDMFATMYAANGVGLAANQIGVPLRVFVYDCPDDEDVRHVGHVVNPRLIEADGVVLRGPEGCLSLPGLEAGTERYDRAVVEGFTTDGEPVRVLGTGWFARCLQHECDHLDGGVYVDRVSGWRHRRVMRQAARAPWNRQRAPEPR.

Residues C104 and H146 each coordinate Fe cation. E147 is a catalytic residue. H150 contacts Fe cation.

This sequence belongs to the polypeptide deformylase family. Fe(2+) is required as a cofactor.

It carries out the reaction N-terminal N-formyl-L-methionyl-[peptide] + H2O = N-terminal L-methionyl-[peptide] + formate. Its function is as follows. Removes the formyl group from the N-terminal Met of newly synthesized proteins. Requires at least a dipeptide for an efficient rate of reaction. N-terminal L-methionine is a prerequisite for activity but the enzyme has broad specificity at other positions. The chain is Peptide deformylase 2 from Streptomyces avermitilis (strain ATCC 31267 / DSM 46492 / JCM 5070 / NBRC 14893 / NCIMB 12804 / NRRL 8165 / MA-4680).